The sequence spans 346 residues: Signal recognition particle receptor FtsY (346 aa).

GTP contacts are provided by residues 143 to 150 (GVNGVGKT), 225 to 229 (DTSGR), and 289 to 292 (TKMD).

The protein belongs to the GTP-binding SRP family. FtsY subfamily. As to quaternary structure, part of the signal recognition particle protein translocation system, which is composed of SRP and FtsY.

It localises to the cell membrane. Its subcellular location is the cytoplasm. It catalyses the reaction GTP + H2O = GDP + phosphate + H(+). Involved in targeting and insertion of nascent membrane proteins into the cytoplasmic membrane. Acts as a receptor for the complex formed by the signal recognition particle (SRP) and the ribosome-nascent chain (RNC). The polypeptide is Signal recognition particle receptor FtsY (Mycoplasma genitalium (strain ATCC 33530 / DSM 19775 / NCTC 10195 / G37) (Mycoplasmoides genitalium)).